The chain runs to 177 residues: Adenine phosphoribosyltransferase (177 aa).

It belongs to the purine/pyrimidine phosphoribosyltransferase family. As to quaternary structure, homodimer.

It localises to the cytoplasm. The enzyme catalyses AMP + diphosphate = 5-phospho-alpha-D-ribose 1-diphosphate + adenine. The protein operates within purine metabolism; AMP biosynthesis via salvage pathway; AMP from adenine: step 1/1. Functionally, catalyzes a salvage reaction resulting in the formation of AMP, that is energically less costly than de novo synthesis. The polypeptide is Adenine phosphoribosyltransferase (Chlorobium luteolum (strain DSM 273 / BCRC 81028 / 2530) (Pelodictyon luteolum)).